Consider the following 86-residue polypeptide: Large ribosomal subunit protein bL31 (86 aa).

The segment at 65 to 86 (YGMGSANSATSKEQKEEKDSKK) is disordered. Residues 76-86 (KEQKEEKDSKK) are compositionally biased toward basic and acidic residues.

Belongs to the bacterial ribosomal protein bL31 family. Type A subfamily. Part of the 50S ribosomal subunit.

Functionally, binds the 23S rRNA. This Prochlorococcus marinus (strain AS9601) protein is Large ribosomal subunit protein bL31.